The following is a 493-amino-acid chain: Probable cytochrome P450 313a2 (493 aa).

A heme-binding site is contributed by C438.

This sequence belongs to the cytochrome P450 family. Heme serves as cofactor.

The protein resides in the endoplasmic reticulum membrane. It localises to the microsome membrane. Functionally, may be involved in the metabolism of insect hormones and in the breakdown of synthetic insecticides. This Drosophila melanogaster (Fruit fly) protein is Probable cytochrome P450 313a2 (Cyp313a2).